We begin with the raw amino-acid sequence, 645 residues long: DNA mismatch repair protein MutL (645 aa).

The tract at residues 371 to 403 is disordered; it reads VHDQKDKNHDVESHKNNLDSTSSTNNESTEVSN. Positions 372 to 387 are enriched in basic and acidic residues; that stretch reads HDQKDKNHDVESHKNN. Residues 390-402 show a composition bias toward low complexity; sequence STSSTNNESTEVS.

The protein belongs to the DNA mismatch repair MutL/HexB family.

In terms of biological role, this protein is involved in the repair of mismatches in DNA. It is required for dam-dependent methyl-directed DNA mismatch repair. May act as a 'molecular matchmaker', a protein that promotes the formation of a stable complex between two or more DNA-binding proteins in an ATP-dependent manner without itself being part of a final effector complex. This is DNA mismatch repair protein MutL from Staphylococcus epidermidis (strain ATCC 35984 / DSM 28319 / BCRC 17069 / CCUG 31568 / BM 3577 / RP62A).